The chain runs to 393 residues: MNVPATRKDLMIVNMGPHHPSMHGVLRLIVTLDGEDVIDCEPILGYLHRGMEKIAENRTIIQYLPYVTRWDYLATMFTEAITVNGPELLGNIQVPKRAGYIRVIMLELSRIASHLLWLGPFMADIGAQTPFFYIFRERELVYDLFEAATGMRMMHNFFRIGGVASDLPHGWIDKCLDFCDYFLTGVTEYQKLITRNPIFLERVEGVGIVGTEEAINWGLSGPMLRASGVQWDLRKVDHYECYDEFDWEIQWQKEGDSLARYLVRIGEMLESIKIIQQALEGIPGGPYENLETRRFDRERDSEWNDFEYRFISKKTSPTFELPKQELYVRVEAPKGELGIFLIGDQSGFPWRWKIRPPGFINLQILPELVKRMKLADIMTILGSIDIIMGEVDR.

Belongs to the complex I 49 kDa subunit family. NDH is composed of at least 16 different subunits, 5 of which are encoded in the nucleus.

The protein resides in the plastid. It is found in the chloroplast thylakoid membrane. It carries out the reaction a plastoquinone + NADH + (n+1) H(+)(in) = a plastoquinol + NAD(+) + n H(+)(out). The enzyme catalyses a plastoquinone + NADPH + (n+1) H(+)(in) = a plastoquinol + NADP(+) + n H(+)(out). In terms of biological role, NDH shuttles electrons from NAD(P)H:plastoquinone, via FMN and iron-sulfur (Fe-S) centers, to quinones in the photosynthetic chain and possibly in a chloroplast respiratory chain. The immediate electron acceptor for the enzyme in this species is believed to be plastoquinone. Couples the redox reaction to proton translocation, and thus conserves the redox energy in a proton gradient. This Manihot esculenta (Cassava) protein is NAD(P)H-quinone oxidoreductase subunit H, chloroplastic.